The chain runs to 285 residues: Hsp90 co-chaperone Cdc37-like 1 (285 aa).

The disordered stretch occupies residues 34 to 54 (LHNSESMDQEQAMAQAELSEL). A coiled-coil region spans residues 35-73 (HNSESMDQEQAMAQAELSELQRSEEEWRRKEAALSQGEN).

The protein belongs to the CDC37 family. In terms of assembly, forms complexes with Hsp70 and Hsp90.

The protein localises to the cytoplasm. Co-chaperone that binds to numerous proteins and promotes their interaction with Hsp70 and Hsp90. This chain is Hsp90 co-chaperone Cdc37-like 1 (cdc37l1), found in Xenopus tropicalis (Western clawed frog).